Consider the following 447-residue polypeptide: N-succinylarginine dihydrolase (447 aa).

Substrate contacts are provided by residues 19-28 (AGLSFGNKAS), N110, and 137-138 (HR). Residue E174 is part of the active site. R212 serves as a coordination point for substrate. Residue H248 is part of the active site. Residues D250 and N359 each coordinate substrate. C365 serves as the catalytic Nucleophile.

The protein belongs to the succinylarginine dihydrolase family. In terms of assembly, homodimer.

The catalysed reaction is N(2)-succinyl-L-arginine + 2 H2O + 2 H(+) = N(2)-succinyl-L-ornithine + 2 NH4(+) + CO2. It participates in amino-acid degradation; L-arginine degradation via AST pathway; L-glutamate and succinate from L-arginine: step 2/5. Its function is as follows. Catalyzes the hydrolysis of N(2)-succinylarginine into N(2)-succinylornithine, ammonia and CO(2). In Escherichia coli O157:H7, this protein is N-succinylarginine dihydrolase.